We begin with the raw amino-acid sequence, 121 residues long: MARIAGIDIPREKRVEVALTYIYGVGLTRAKSILAKAGVNPDIRVKDLDDGDVQKLRTAVESFTLEGDLRRQEGMALKRLQDIGCLRGRRHRMSLPVRGQRTRTNARTRRGSRKTVAGRKK.

A disordered region spans residues 91-121 (HRMSLPVRGQRTRTNARTRRGSRKTVAGRKK). Residues 100–121 (QRTRTNARTRRGSRKTVAGRKK) show a composition bias toward basic residues.

It belongs to the universal ribosomal protein uS13 family. Part of the 30S ribosomal subunit. Forms a loose heterodimer with protein S19. Forms two bridges to the 50S subunit in the 70S ribosome.

Its function is as follows. Located at the top of the head of the 30S subunit, it contacts several helices of the 16S rRNA. In the 70S ribosome it contacts the 23S rRNA (bridge B1a) and protein L5 of the 50S subunit (bridge B1b), connecting the 2 subunits; these bridges are implicated in subunit movement. Contacts the tRNAs in the A and P-sites. The chain is Small ribosomal subunit protein uS13 from Prochlorococcus marinus (strain MIT 9211).